A 534-amino-acid chain; its full sequence is Hypothemycin biosynthesis cluster protein hpm4 (534 aa).

Disordered stretches follow at residues 34-61, 110-130, and 236-287; these read IEPA…SDGP, LQSP…PLRL, and DGTG…KKCI. Composition is skewed to low complexity over residues 112–127 and 258–275; these read SPTT…SCAP and TVSS…ACQT.

Its pathway is secondary metabolite biosynthesis. Its function is as follows. Part of the gene cluster that mediates the biosynthesis of hypothemycin, a resorcylic acid lactone (RAL) that irreversibly inhibits a subset of protein kinases with a conserved cysteine in the ATP binding site such as human ERK2. The first step is performed by both PKSs hmp3 and hmp8 and leads to the production of 7',8'-dehydrozearalenol (DHZ). The highly reducing PKS hpm8 synthesizes the reduced hexaketide (7S,11S,2E,8E)-7,11-dihydroxy-dodeca-2,8-dienoate, which is transferred downstream to the non-reducing PKS hpm3. Hpm3 then extends the reduced hexaketide to a nonaketide, after which regioselective cyclization and macrolactonization affords DHZ. The next step is the conversion of DHZ into aigialomycin C and is performed by the O-methyltransferase hmp5, the FAD-binding monooxygenase hmp7, and the cytochrome P450 monooxygenase hmp1. The wide substrate tolerance of the hmp5 and hmp7 implies that the reactions from DHZ to aigialomycin C can occur in any order. The steps from aigialomycin C to hypothemycin are less well established. The FAD-linked oxidoreductase hmp9 presumably catalyzes oxidation of the C-6' hydroxyl to a ketone. The timing of this oxidation is important, since the resulting enone functional group is a Michael acceptor that can react spontaneously with glutathione, an abundant metabolite in fungal cells. The glutathione S-transferase hmp2 catalyzes cis-trans isomerization of the 7',8' double bond with equilibrium favoring the trans isomer. The hpm6-encoded transporter might preferentially pump hypothemycin out of the cell relative to the trans isomer aigialomycin A. The cis-to-trans isomerization may be coupled with C-4' hydroxylation, since all known hypothemycin analogs containing the enone functional group also have hydroxyl groups at both C-4' and C-5'. This chain is Hypothemycin biosynthesis cluster protein hpm4, found in Hypomyces subiculosus (Nectria subiculosa).